The chain runs to 58 residues: Mu-diguetoxin-Dc1b (58 aa).

Intrachain disulfides connect cysteine 12-cysteine 26, cysteine 20-cysteine 40, cysteine 25-cysteine 54, and cysteine 42-cysteine 52.

Belongs to the neurotoxin 26 (DTX) family. Expressed by the venom gland.

Its subcellular location is the secreted. Its function is as follows. Acts by delaying the inactivation of presynaptic voltage-sensitive sodium channels (Nav). Acts against insects and cause a progressive spastic paralysis. In Diguetia canities (Desert bush spider), this protein is Mu-diguetoxin-Dc1b.